A 53-amino-acid polypeptide reads, in one-letter code: Conotoxin Vc5.3 (53 aa).

A signal peptide spans 1–15 (VILLLLTASAPSVDA). Residues 16–41 (RPKTEDVPLSSFRDNTKSTLQRLLKR) constitute a propeptide that is removed on maturation.

This sequence belongs to the conotoxin T superfamily. Post-translationally, contains 2 disulfide bonds that can be either 'C1-C3, C2-C4' or 'C1-C4, C2-C3', since these disulfide connectivities have been observed for conotoxins with cysteine framework V (for examples, see AC P0DQQ7 and AC P81755). In terms of tissue distribution, expressed by the venom duct.

It localises to the secreted. The protein is Conotoxin Vc5.3 of Conus victoriae (Queen Victoria cone).